The chain runs to 1192 residues: Leucine-rich repeat receptor protein kinase EMS1 (1192 aa).

An N-terminal signal peptide occupies residues 1 to 18 (MAFLTALFLFLFFSFSSS). Asn-47 is a glycosylation site (N-linked (GlcNAc...) asparagine). 28 LRR repeats span residues 64 to 87 (LGRV…EISS), 90 to 112 (NLRE…IWNL), 114 to 137 (HLQT…SELP), 138 to 160 (QLLY…FFIS), 163 to 185 (ALSS…IGKL), 187 to 209 (NLSN…IGNI), 235 to 257 (HLAK…FGEL), 259 to 281 (NLSI…LGNC), 283 to 304 (SLKS…ELSE), 330 to 352 (VLDS…IEDC), 354 to 376 (MLKH…LCGS), 378 to 400 (SLEA…FDGC), 402 to 425 (SLGE…WKLP), 426 to 447 (LMAL…LWKS), 449 to 471 (NLME…IGNA), 473 to 496 (SLKR…GKLT), 497 to 520 (SLSV…GDCT), 521 to 543 (SLTT…ITAL), 545 to 567 (QLQC…PSAY), 581 to 603 (HHGI…LGEC), 605 to 628 (VLVE…SRLT), 629 to 651 (NLTI…MGNS), 653 to 675 (KLQG…FGLL), 677 to 697 (SLVK…ASLG), 701 to 723 (ELTH…LSTM), 725 to 748 (KLVG…GNLT), 749 to 772 (QLEY…CGLP), and 773 to 795 (NLEF…GVCQ). N-linked (GlcNAc...) asparagine glycosylation is found at Asn-171, Asn-187, and Asn-208. A glycan (N-linked (GlcNAc...) asparagine) is linked at Asn-259. Asn-414 and Asn-435 each carry an N-linked (GlcNAc...) asparagine glycan. N-linked (GlcNAc...) asparagine glycosylation occurs at Asn-555. Residue Asn-629 is glycosylated (N-linked (GlcNAc...) asparagine). Asn-682, Asn-711, and Asn-746 each carry an N-linked (GlcNAc...) asparagine glycan. A helical membrane pass occupies residues 828 to 848 (WGIAGLMLGFTIIVFVFVFSL). A Phosphothreonine modification is found at Thr-914. In terms of domain architecture, Protein kinase spans 917–1192 (FSKKNIIGDG…LDVLKALKEI (276 aa)). ATP contacts are provided by residues 923 to 931 (IGDGGFGTV) and Lys-945. At Tyr-990 the chain carries Phosphotyrosine. Residue Asp-1043 is the Proton acceptor of the active site. Tyr-1085 is subject to Phosphotyrosine.

This sequence belongs to the protein kinase superfamily. Ser/Thr protein kinase family. As to quaternary structure, interacts with TPD1. Post-translationally, autophosphorylates in vitro. As to expression, present in young buds, open flowers and siliques but absent from mature leaves and roots. Strongly expressed in the young organ primordia, and as the anthers and ovules developed, became focused in the microsporangia and in the distal and chalazal regions of the ovule. In cv. Landsberg erecta, only expressed in the anthers of young floral buds.

The protein resides in the cell membrane. The enzyme catalyses L-seryl-[protein] + ATP = O-phospho-L-seryl-[protein] + ADP + H(+). It carries out the reaction L-threonyl-[protein] + ATP = O-phospho-L-threonyl-[protein] + ADP + H(+). In terms of biological role, receptor with a serine/threonine-protein kinase activity required for the specification of the correct number of male archesporial initials and for the subsequent specification of tapetal and middle cell layer identities. In seeds, required for enhancing cell size and the rate of embryonic development. This chain is Leucine-rich repeat receptor protein kinase EMS1, found in Arabidopsis thaliana (Mouse-ear cress).